A 204-amino-acid polypeptide reads, in one-letter code: Leucyl/phenylalanyl-tRNA--protein transferase (204 aa).

Belongs to the L/F-transferase family.

The protein resides in the cytoplasm. It carries out the reaction N-terminal L-lysyl-[protein] + L-leucyl-tRNA(Leu) = N-terminal L-leucyl-L-lysyl-[protein] + tRNA(Leu) + H(+). It catalyses the reaction N-terminal L-arginyl-[protein] + L-leucyl-tRNA(Leu) = N-terminal L-leucyl-L-arginyl-[protein] + tRNA(Leu) + H(+). The enzyme catalyses L-phenylalanyl-tRNA(Phe) + an N-terminal L-alpha-aminoacyl-[protein] = an N-terminal L-phenylalanyl-L-alpha-aminoacyl-[protein] + tRNA(Phe). Functions in the N-end rule pathway of protein degradation where it conjugates Leu, Phe and, less efficiently, Met from aminoacyl-tRNAs to the N-termini of proteins containing an N-terminal arginine or lysine. The polypeptide is Leucyl/phenylalanyl-tRNA--protein transferase (Rhizobium etli (strain ATCC 51251 / DSM 11541 / JCM 21823 / NBRC 15573 / CFN 42)).